The following is a 152-amino-acid chain: Endoribonuclease YbeY (152 aa).

Zn(2+) is bound by residues His112, His116, and His122.

Belongs to the endoribonuclease YbeY family. The cofactor is Zn(2+).

It is found in the cytoplasm. Single strand-specific metallo-endoribonuclease involved in late-stage 70S ribosome quality control and in maturation of the 3' terminus of the 16S rRNA. This is Endoribonuclease YbeY from Pseudoalteromonas translucida (strain TAC 125).